A 203-amino-acid chain; its full sequence is Putative 3-methyladenine DNA glycosylase (203 aa).

The protein belongs to the DNA glycosylase MPG family.

The sequence is that of Putative 3-methyladenine DNA glycosylase from Mycobacterium tuberculosis (strain ATCC 25177 / H37Ra).